A 183-amino-acid chain; its full sequence is Capsid protein (183 aa).

Residues 136–183 (NAPILSTLPETTVVRRRGRSPRRRTPSPRRRRSQSPRRRRSQSRESQC) form a disordered region. The span at 149 to 176 (VRRRGRSPRRRTPSPRRRRSQSPRRRRS) shows a compositional bias: basic residues. A phosphoserine; by host mark is found at Ser-155, Ser-162, and Ser-170. A 1; half-length repeat occupies 155 to 161 (SPRRRTP). Positions 155-177 (SPRRRTPSPRRRRSQSPRRRRSQ) are 3 X 8 AA repeats of S-P-R-R-R-[PR]-S-Q. The short motif at 158-175 (RRTPSPRRRRSQSPRRRR) is the Bipartite nuclear localization signal element. Tandem repeats lie at residues 162–169 (SPRRRRSQ) and 170–177 (SPRRRRSQ). The segment at 177–183 (QSRESQC) is RNA binding.

It belongs to the orthohepadnavirus core antigen family. Homodimerizes, then multimerizes. Interacts with cytosol exposed regions of viral L glycoprotein present in the reticulum-to-Golgi compartment. Interacts with human FLNB. Phosphorylated form interacts with host importin alpha; this interaction depends on the exposure of the NLS, which itself depends upon genome maturation and/or phosphorylation of the capsid protein. Interacts with host NUP153. Phosphorylated by host SRPK1, SRPK2, and maybe protein kinase C or GAPDH. Phosphorylation is critical for pregenomic RNA packaging. Protein kinase C phosphorylation is stimulated by HBx protein and may play a role in transport of the viral genome to the nucleus at the late step during the viral replication cycle.

Its subcellular location is the virion. It is found in the host cytoplasm. Self assembles to form an icosahedral capsid. Most capsids appear to be large particles with an icosahedral symmetry of T=4 and consist of 240 copies of capsid protein, though a fraction forms smaller T=3 particles consisting of 180 capsid proteins. Entering capsids are transported along microtubules to the nucleus. Phosphorylation of the capsid is thought to induce exposure of nuclear localization signal in the C-terminal portion of the capsid protein that allows binding to the nuclear pore complex via the importin (karyopherin-) alpha and beta. Capsids are imported in intact form through the nuclear pore into the nuclear basket, where it probably binds NUP153. Only capsids that contain the mature viral genome can release the viral DNA and capsid protein into the nucleoplasm. Immature capsids get stuck in the basket. Capsids encapsulate the pre-genomic RNA and the P protein. Pre-genomic RNA is reverse-transcribed into DNA while the capsid is still in the cytoplasm. The capsid can then either be directed to the nucleus, providing more genomes for transcription, or bud through the endoplasmic reticulum to provide new virions. The polypeptide is Capsid protein (Homo sapiens (Human)).